The chain runs to 176 residues: MASKLLRKLAYPTLPVKGKIYDPFSKFQQNLYGGSKTEAGNNKIPKFGHKTRRVWIPNGHSKWLYSNVLEEKFHLYVTSRVLRTIDKEGGLDEYLVKSTPSRLKSLGLRGVELRALVLHKLGAKNPILEKLPSDSGAQKRYLEKVKDVVLKLNRSKKLYQQIKSLVGKERSVNTSV.

A mitochondrion-targeting transit peptide spans 1 to 8; the sequence is MASKLLRK.

It belongs to the bacterial ribosomal protein bL28 family. Component of the mitochondrial large ribosomal subunit (mt-LSU). Mature yeast 74S mitochondrial ribosomes consist of a small (37S) and a large (54S) subunit. The 37S small subunit contains a 15S ribosomal RNA (15S mt-rRNA) and at least 32 different proteins. The 54S large subunit contains a 21S rRNA (21S mt-rRNA) and at least 45 different proteins.

The protein localises to the cytoplasm. Its subcellular location is the mitochondrion. In terms of biological role, component of the mitochondrial ribosome (mitoribosome), a dedicated translation machinery responsible for the synthesis of mitochondrial genome-encoded proteins, including at least some of the essential transmembrane subunits of the mitochondrial respiratory chain. The mitoribosomes are attached to the mitochondrial inner membrane and translation products are cotranslationally integrated into the membrane. The polypeptide is Large ribosomal subunit protein bL28m (mrpl24) (Schizosaccharomyces pombe (strain 972 / ATCC 24843) (Fission yeast)).